The following is a 662-amino-acid chain: Glycogen debranching enzyme (662 aa).

D338 functions as the Nucleophile in the catalytic mechanism. Catalysis depends on E373, which acts as the Proton donor.

Belongs to the glycosyl hydrolase 13 family.

The enzyme catalyses Hydrolysis of (1-&gt;6)-alpha-D-glucosidic linkages to branches with degrees of polymerization of three or four glucose residues in limit dextrin.. It functions in the pathway glycan degradation; glycogen degradation. In terms of biological role, removes maltotriose and maltotetraose chains that are attached by 1,6-alpha-linkage to the limit dextrin main chain, generating a debranched limit dextrin. In Yersinia enterocolitica serotype O:8 / biotype 1B (strain NCTC 13174 / 8081), this protein is Glycogen debranching enzyme.